A 433-amino-acid chain; its full sequence is Homogentisate 1,2-dioxygenase (433 aa).

Catalysis depends on His-288, which acts as the Proton acceptor. Fe cation is bound by residues His-331 and Glu-337. 2 residues coordinate homogentisate: Tyr-346 and His-367. His-367 serves as a coordination point for Fe cation.

This sequence belongs to the homogentisate dioxygenase family. Hexamer; dimer of trimers. Fe cation serves as cofactor.

It carries out the reaction homogentisate + O2 = 4-maleylacetoacetate + H(+). The protein operates within amino-acid degradation; L-phenylalanine degradation; acetoacetate and fumarate from L-phenylalanine: step 4/6. Its function is as follows. Involved in the catabolism of homogentisate (2,5-dihydroxyphenylacetate or 2,5-OH-PhAc), a central intermediate in the degradation of phenylalanine and tyrosine. Catalyzes the oxidative ring cleavage of the aromatic ring of homogentisate to yield maleylacetoacetate. This chain is Homogentisate 1,2-dioxygenase, found in Pseudomonas putida (strain GB-1).